The sequence spans 520 residues: Nuclear GTP-binding protein NUG1 (520 aa).

Composition is skewed to basic residues over residues 1-13 (MRVR…RTST) and 21-34 (KKAS…KKMA). The interval 1–53 (MRVRKRQSRRTSTKLKEGIKKKASAHRKKEKKMAKKDVTWRSRSKKDPGIPSN) is disordered. The span at 35-48 (KKDVTWRSRSKKDP) shows a compositional bias: basic and acidic residues. The CP-type G domain maps to 165–343 (YDKIFKSVID…ILDSPGICFP (179 aa)). Residues 213-216 (NKVD), 287-294 (GYPNVGKS), and 336-339 (DSPG) each bind GTP. Ser-337 is modified (phosphoserine).

This sequence belongs to the TRAFAC class YlqF/YawG GTPase family.

The protein resides in the nucleus. In terms of biological role, GTPase required for 60S ribosomal subunit export to the cytoplasm. This chain is Nuclear GTP-binding protein NUG1 (NUG1), found in Saccharomyces cerevisiae (strain ATCC 204508 / S288c) (Baker's yeast).